A 1509-amino-acid polypeptide reads, in one-letter code: ABC transporter G family member 38 (1509 aa).

Positions 196–467 (LGLVGLNFAK…FERCGFRCPE (272 aa)) constitute an ABC transporter 1 domain. 229–236 (GPPSSGKT) contacts ATP. One can recognise an ABC transmembrane type-2 1 domain in the interval 545–758 (ELLKTSCSKE…AYIAFSSNEM (214 aa)). Transmembrane regions (helical) follow at residues 563–583 (FVYI…STVF), 598–618 (IYIG…FADL), 651–671 (IPSS…TMGF), 682–702 (LLVV…TAGL), 707–727 (VVTN…GGFI), 733–753 (IPKW…YIAF), and 791–811 (YWIA…LFSL). The 253-residue stretch at 908–1160 (MSFNEINYYV…KVVEYFEAIP (253 aa)) folds into the ABC transporter 2 domain. Residue 953–960 (GVSGAGKT) coordinates ATP. In terms of domain architecture, ABC transmembrane type-2 2 spans 1233 to 1447 (NQFKLCLWKQ…TVYGLIVSQY (215 aa)). 7 helical membrane passes run 1252 to 1272 (YNLV…TIFW), 1284 to 1304 (LLVI…ENSV), 1336 to 1356 (VVVE…IVYP), 1367 to 1387 (FFWF…YGMM), 1397 to 1417 (VASI…GFFI), 1425 to 1445 (WWVW…LIVS), and 1478 to 1498 (FMGV…FTYA).

Belongs to the ABC transporter superfamily. ABCG family. PDR (TC 3.A.1.205) subfamily.

Its subcellular location is the membrane. Its function is as follows. May be a general defense protein. This is ABC transporter G family member 38 from Oryza sativa subsp. japonica (Rice).